Reading from the N-terminus, the 345-residue chain is UDP-3-O-acylglucosamine N-acyltransferase (345 aa).

H239 functions as the Proton acceptor in the catalytic mechanism.

It belongs to the transferase hexapeptide repeat family. LpxD subfamily. In terms of assembly, homotrimer.

The catalysed reaction is a UDP-3-O-[(3R)-3-hydroxyacyl]-alpha-D-glucosamine + a (3R)-hydroxyacyl-[ACP] = a UDP-2-N,3-O-bis[(3R)-3-hydroxyacyl]-alpha-D-glucosamine + holo-[ACP] + H(+). Its pathway is bacterial outer membrane biogenesis; LPS lipid A biosynthesis. Functionally, catalyzes the N-acylation of UDP-3-O-acylglucosamine using 3-hydroxyacyl-ACP as the acyl donor. Is involved in the biosynthesis of lipid A, a phosphorylated glycolipid that anchors the lipopolysaccharide to the outer membrane of the cell. The sequence is that of UDP-3-O-acylglucosamine N-acyltransferase from Geobacter metallireducens (strain ATCC 53774 / DSM 7210 / GS-15).